The following is a 106-amino-acid chain: Large ribosomal subunit protein eL42 (106 aa).

Residues 36–56 (FAQGKRRYDRKQSGYGGQTKP) are disordered.

This sequence belongs to the eukaryotic ribosomal protein eL42 family.

The sequence is that of Large ribosomal subunit protein eL42 (RPL44) from Coprinopsis cinerea (strain Okayama-7 / 130 / ATCC MYA-4618 / FGSC 9003) (Inky cap fungus).